The chain runs to 83 residues: Toxin TdNa5 (83 aa).

An N-terminal signal peptide occupies residues 1-20 (MKTIIFFIACLMLIDVVVES). Residues 21–82 (KDGYIIEHRG…IFDSNNNKCG (62 aa)) enclose the LCN-type CS-alpha/beta domain. Intrachain disulfides connect Cys-31/Cys-81, Cys-35/Cys-57, Cys-43/Cys-62, and Cys-47/Cys-64. Cys-81 carries the cysteine amide modification.

This sequence belongs to the long (4 C-C) scorpion toxin superfamily. Sodium channel inhibitor family. Beta subfamily. Expressed by the venom gland.

It localises to the secreted. In terms of biological role, inhibits the sodium currents (Nav) in an apparent irreversible manner. Produces small depolarization and induces repetitive firing in squid axons. Is specific for arthropods (crickets, triatomides, crabs and squids), but is non-toxic to mice. Shows antibacterial activity against both Gram-positive and Gram-negative bacteria. This Tityus discrepans (Venezuelan scorpion) protein is Toxin TdNa5.